We begin with the raw amino-acid sequence, 480 residues long: Glutamate--tRNA ligase (480 aa).

The 'HIGH' region signature appears at P9–T19. The 'KMSKS' region motif lies at K250 to R254. ATP is bound at residue K253.

Belongs to the class-I aminoacyl-tRNA synthetase family. Glutamate--tRNA ligase type 1 subfamily. Monomer.

It localises to the cytoplasm. The catalysed reaction is tRNA(Glu) + L-glutamate + ATP = L-glutamyl-tRNA(Glu) + AMP + diphosphate. Catalyzes the attachment of glutamate to tRNA(Glu) in a two-step reaction: glutamate is first activated by ATP to form Glu-AMP and then transferred to the acceptor end of tRNA(Glu). The chain is Glutamate--tRNA ligase from Microcystis aeruginosa (strain NIES-843 / IAM M-2473).